Here is a 713-residue protein sequence, read N- to C-terminus: MAVQDEYILVTGGAGYIGSHTVIELINHGYKVIIVDNLCNSCYDAVARVEFIVRKSIKFFKLDLRDKEGLAQIFDTFKIKGVIHFAALKAVGESMKLPLEYYDNNICGTITLLNVMREHRVKTVVFSSSATVYGDATRFDNMIPIPESCPNDPTNPYGKTKYAIENIIKDLHTSDNTWRGAILRYFNPIGAHPSGLLGEDPLGIPNNLLPFLAQVAIGRREKLLVFGDDYDSHDGTPIRDYIHVVDLAKGHIAALNYLNKINNSEGMYREWNLGTGKGSSVFDIYHAFCKEVGKDLPYEVVGRRTGDVLNLTASPNRANSELKWKAELSITDACRDLWKWTIENPFGFQIDNYKWKLFNTLGIMDYKNRLHTICFQDLEVSIANYGALVQAVRYKGRNLVNGFNDFSRYKLKENPFFGATIGRFANRIANGQFEVDGHLYTLCKNENNKTTLHGGNNGFDKQFFLGPIARQYEDYNTLEFILVDKDGNNGFPSDLETLVKYTIKNNSLEIEYKSVIPEYSKLNVTAVNLTNHSYWNLASPNKTIDGTIIKSTTNVYLKVNSETSLPTGDIVEWQNDITKPTKLDPNISFDNCFIVDREASKFCLDTRKYSLKNIVEVIHPSVPVKLVVSTTEPAFQLYTGDGNDICEFQSRSGFCVETGRFINALNNEKWSKQVILRKGEVYGARSKFSLYAQDLEENKHFLDSASYNSGEYY.

Residues 1–350 (MAVQDEYILV…TIENPFGFQI (350 aa)) are galactowaldenase. Residue 7–38 (YILVTGGAGYIGSHTVIELINHGYKVIIVDNL) coordinates NAD(+). A mutarotase region spans residues 351–713 (DNYKWKLFNT…SASYNSGEYY (363 aa)). The active-site For mutarotase activity is His532.

It in the N-terminal section; belongs to the NAD(P)-dependent epimerase/dehydratase family. The protein in the C-terminal section; belongs to the aldose epimerase family. It depends on NAD(+) as a cofactor.

The enzyme catalyses UDP-alpha-D-glucose = UDP-alpha-D-galactose. It carries out the reaction alpha-D-glucose = beta-D-glucose. The protein operates within carbohydrate metabolism; galactose metabolism. It participates in carbohydrate metabolism; hexose metabolism. In terms of biological role, mutarotase converts alpha-aldose to the beta-anomer. It is active on D-glucose, L-arabinose, D-xylose, D-galactose, maltose and lactose. This chain is Bifunctional protein gal10 (gal10), found in Schizosaccharomyces pombe (strain 972 / ATCC 24843) (Fission yeast).